The chain runs to 608 residues: tRNA (guanine(37)-N(1))-methyltransferase 1 (608 aa).

The tract at residues 207–229 (SRPKKKKRRKEEERSEGKKRTGK) is disordered. Residues 216–229 (KEEERSEGKKRTGK) show a composition bias toward basic and acidic residues. S-adenosyl-L-methionine contacts are provided by residues Arg-425, 463 to 464 (DL), 491 to 492 (DG), and Asn-514.

The protein belongs to the class I-like SAM-binding methyltransferase superfamily. TRM5/TYW2 family. In terms of assembly, monomer.

The protein localises to the mitochondrion matrix. It localises to the nucleus. The protein resides in the cytoplasm. The enzyme catalyses guanosine(37) in tRNA + S-adenosyl-L-methionine = N(1)-methylguanosine(37) in tRNA + S-adenosyl-L-homocysteine + H(+). Functionally, specifically methylates the N1 position of guanosine-37 in various cytoplasmic and mitochondrial tRNAs. Methylation is not dependent on the nature of the nucleoside 5' of the target nucleoside. This is the first step in the biosynthesis of wybutosine (yW), a modified base adjacent to the anticodon of tRNAs and required for accurate decoding. The sequence is that of tRNA (guanine(37)-N(1))-methyltransferase 1 from Vitis vinifera (Grape).